Here is a 58-residue protein sequence, read N- to C-terminus: Large ribosomal subunit protein uL30 (58 aa).

Belongs to the universal ribosomal protein uL30 family. Part of the 50S ribosomal subunit.

In Desulfovibrio desulfuricans (strain ATCC 27774 / DSM 6949 / MB), this protein is Large ribosomal subunit protein uL30.